The following is a 639-amino-acid chain: Chaperone protein DnaK 1 (639 aa).

Thr199 is modified (phosphothreonine; by autocatalysis). Positions 603-612 (QQQAQAQQAP) are enriched in low complexity. The disordered stretch occupies residues 603-639 (QQQAQAQQAPGGEGEQEAKQDDNVVDAEFEEVKDEKK). Residues 625–639 (NVVDAEFEEVKDEKK) are compositionally biased toward acidic residues.

It belongs to the heat shock protein 70 family.

Functionally, acts as a chaperone. The chain is Chaperone protein DnaK 1 from Photobacterium profundum (strain SS9).